Reading from the N-terminus, the 94-residue chain is Large ribosomal subunit protein bL28 (94 aa).

The interval 1–21 is disordered; the sequence is MARRCEVTGRGTVSGNNVSHS. Positions 11–20 are enriched in polar residues; it reads GTVSGNNVSH.

This sequence belongs to the bacterial ribosomal protein bL28 family.

In Leptospira interrogans serogroup Icterohaemorrhagiae serovar copenhageni (strain Fiocruz L1-130), this protein is Large ribosomal subunit protein bL28.